A 231-amino-acid chain; its full sequence is Phosphatidylserine decarboxylase proenzyme (231 aa).

Residue serine 188 is the Schiff-base intermediate with substrate; via pyruvic acid of the active site. Serine 188 bears the Pyruvic acid (Ser); by autocatalysis mark.

The protein belongs to the phosphatidylserine decarboxylase family. PSD-A subfamily. In terms of assembly, heterodimer of a large membrane-associated beta subunit and a small pyruvoyl-containing alpha subunit. Pyruvate is required as a cofactor. Post-translationally, is synthesized initially as an inactive proenzyme. Formation of the active enzyme involves a self-maturation process in which the active site pyruvoyl group is generated from an internal serine residue via an autocatalytic post-translational modification. Two non-identical subunits are generated from the proenzyme in this reaction, and the pyruvate is formed at the N-terminus of the alpha chain, which is derived from the carboxyl end of the proenzyme. The post-translation cleavage follows an unusual pathway, termed non-hydrolytic serinolysis, in which the side chain hydroxyl group of the serine supplies its oxygen atom to form the C-terminus of the beta chain, while the remainder of the serine residue undergoes an oxidative deamination to produce ammonia and the pyruvoyl prosthetic group on the alpha chain.

The protein resides in the cell membrane. It carries out the reaction a 1,2-diacyl-sn-glycero-3-phospho-L-serine + H(+) = a 1,2-diacyl-sn-glycero-3-phosphoethanolamine + CO2. It participates in phospholipid metabolism; phosphatidylethanolamine biosynthesis; phosphatidylethanolamine from CDP-diacylglycerol: step 2/2. Catalyzes the formation of phosphatidylethanolamine (PtdEtn) from phosphatidylserine (PtdSer). This chain is Phosphatidylserine decarboxylase proenzyme, found in Rickettsia bellii (strain OSU 85-389).